Here is an 817-residue protein sequence, read N- to C-terminus: Phosphoenolpyruvate synthase (817 aa).

Histidine 442 functions as the Tele-phosphohistidine intermediate in the catalytic mechanism. Substrate is bound by residues arginine 540, arginine 587, glutamate 684, glycine 706, threonine 707, asparagine 708, and aspartate 709. Glutamate 684 contributes to the Mg(2+) binding site. Aspartate 709 provides a ligand contact to Mg(2+). The Proton donor role is filled by cysteine 756.

It belongs to the PEP-utilizing enzyme family. Homooctamer. It depends on Mg(2+) as a cofactor.

The catalysed reaction is pyruvate + ATP + H2O = phosphoenolpyruvate + AMP + phosphate + 2 H(+). It functions in the pathway carbohydrate biosynthesis; gluconeogenesis. Functionally, catalyzes the phosphorylation of pyruvate to phosphoenolpyruvate. The protein is Phosphoenolpyruvate synthase (ppsA) of Pyrococcus furiosus (strain ATCC 43587 / DSM 3638 / JCM 8422 / Vc1).